The following is a 62-amino-acid chain: Large ribosomal subunit protein bL33 (62 aa).

This sequence belongs to the bacterial ribosomal protein bL33 family.

In Acaryochloris marina (strain MBIC 11017), this protein is Large ribosomal subunit protein bL33.